A 253-amino-acid chain; its full sequence is Cyclin-C1-2 (253 aa).

It belongs to the cyclin family. Cyclin C subfamily.

The chain is Cyclin-C1-2 (CYCC1-2) from Arabidopsis thaliana (Mouse-ear cress).